A 475-amino-acid polypeptide reads, in one-letter code: Tubulin gamma chain (475 aa).

A GTP-binding site is contributed by 142-148 (AGGTGSG). Residues 455–475 (GKQVSGEGNTSGTVDSRVGAS) are disordered.

It belongs to the tubulin family.

It is found in the cytoplasm. The protein localises to the cytoskeleton. The protein resides in the microtubule organizing center. Its function is as follows. Tubulin is the major constituent of microtubules. The gamma chain is found at microtubule organizing centers (MTOC) such as the spindle poles, suggesting that it is involved in the minus-end nucleation of microtubule assembly. The protein is Tubulin gamma chain (TUBG1) of Physcomitrium patens (Spreading-leaved earth moss).